A 196-amino-acid polypeptide reads, in one-letter code: Calcineurin B homologous protein 2 (196 aa).

Gly2 is lipidated: N-myristoyl glycine. 4 EF-hand domains span residues 26 to 61 (ASLL…AVNP), 71 to 106 (FPDG…PKKP), 111 to 146 (SRRN…MVGV), and 152 to 187 (QLEN…MDVE). Phosphoserine is present on Ser27. Ca(2+)-binding residues include Asp124, Asp126, Asp128, Lys130, and Glu135. Positions 137–148 (LQVLRLMVGVQV) match the Nuclear export signal motif. Positions 165, 167, 169, and 176 each coordinate Ca(2+).

The protein belongs to the calcineurin regulatory subunit family. CHP subfamily. In terms of assembly, interacts with PPP3CA. Interacts with SLC9A1/NHE1; the interaction occurs in a calcium-dependent manner. Expressed in malignantly transformed cells but not detected in normal tissues.

It localises to the nucleus. The protein localises to the cytoplasm. It is found in the cell membrane. Functions as an integral cofactor in cell pH regulation by controlling plasma membrane-type Na(+)/H(+) exchange activity. Binds to and activates SLC9A1/NHE1 in a serum-independent manner, thus increasing pH and protecting cells from serum deprivation-induced death. Also plays a role in the regulation of cell proliferation and tumor growth by increasing the phosphatase activity of PPP3CA in a calcium-dependent manner. Activator of the calcineurin/NFAT signaling pathway. Involved in the cytoplasmic translocation of the transcription factor NFATC3 to the nucleus. The polypeptide is Calcineurin B homologous protein 2 (CHP2) (Homo sapiens (Human)).